A 537-amino-acid polypeptide reads, in one-letter code: Phosphoenolpyruvate carboxykinase (ATP) (537 aa).

Substrate is bound by residues Arg-61, Tyr-195, and Lys-201. Residues Lys-201, His-220, and 236–244 contribute to the ATP site; that span reads GLSGTGKTT. Residues Lys-201 and His-220 each coordinate Mn(2+). Mn(2+) is bound at residue Asp-257. ATP is bound by residues Glu-285, Arg-323, and Thr-448. Arg-323 is a binding site for substrate.

This sequence belongs to the phosphoenolpyruvate carboxykinase (ATP) family. It depends on Mn(2+) as a cofactor.

Its subcellular location is the cytoplasm. It carries out the reaction oxaloacetate + ATP = phosphoenolpyruvate + ADP + CO2. Its pathway is carbohydrate biosynthesis; gluconeogenesis. In terms of biological role, involved in the gluconeogenesis. Catalyzes the conversion of oxaloacetate (OAA) to phosphoenolpyruvate (PEP) through direct phosphoryl transfer between the nucleoside triphosphate and OAA. This Rhodopseudomonas palustris (strain BisA53) protein is Phosphoenolpyruvate carboxykinase (ATP).